The chain runs to 588 residues: Protein disulfide-isomerase-like protein of the testis (588 aa).

Residues 1–20 form the signal peptide; sequence MELLWTPLLLVAACLSEVLG. N55, N157, and N337 each carry an N-linked (GlcNAc...) asparagine glycan. Residues 385-448 form the Thioredoxin domain; the sequence is PVKKLVGKNF…IAKIDITAND (64 aa). Composition is skewed to basic and acidic residues over residues 531–542, 549–567, and 574–588; these read IEDTSKQDRPVK, SIRK…EREA, and EQPK…KEEL. The segment at 531–588 is disordered; that stretch reads IEDTSKQDRPVKESPVLDSIRKPEEPERRKETAEREAAAAQPKEQPKPERKLEVKEEL. Positions 585–588 match the Prevents secretion from ER motif; sequence KEEL.

It belongs to the protein disulfide isomerase family. As to quaternary structure, homodimer. The homodimer is not disulfide-linked. Interacts with CLGN and ERO1A. N-glycosylated. Testis-specific (at protein level).

It is found in the endoplasmic reticulum. Functionally, probable redox-inactive chaperone involved in spermatogenesis. This is Protein disulfide-isomerase-like protein of the testis (Pdilt) from Mus musculus (Mouse).